We begin with the raw amino-acid sequence, 341 residues long: HTH-type transcriptional repressor CytR (341 aa).

Positions 10-64 (ATMKDVALKAKVSTATVSRALMNPDKVSQATRNRVEKAAREVGYLPQPMGRNVKR) constitute an HTH lacI-type domain. A DNA-binding region (H-T-H motif) is located at residues 12–31 (MKDVALKAKVSTATVSRALM).

Functionally, this protein negatively controls the transcription initiation of genes such as deoCABD, udp, and cdd encoding catabolizing enzymes and nupC, nupG, and tsx encoding transporting and pore-forming proteins. Binds cytidine and adenosine as effectors. The sequence is that of HTH-type transcriptional repressor CytR (cytR) from Escherichia coli (strain K12).